The sequence spans 215 residues: Peroxiredoxin 1 (215 aa).

The Thioredoxin domain occupies 2-158 (VKLYSKFPDV…LLRITKAAIV (157 aa)). The Cysteine sulfenic acid (-SOH) intermediate role is filled by Cys46. Residue Arg121 coordinates substrate.

The protein belongs to the peroxiredoxin family. Prx6 subfamily. In terms of assembly, homodecamer. Pentamer of dimers that assemble into a ring structure.

It is found in the cytoplasm. The catalysed reaction is a hydroperoxide + [thioredoxin]-dithiol = an alcohol + [thioredoxin]-disulfide + H2O. Its function is as follows. Thiol-specific peroxidase that catalyzes the reduction of hydrogen peroxide and organic hydroperoxides to water and alcohols, respectively. Plays a role in cell protection against oxidative stress by detoxifying peroxides. This Sulfurisphaera tokodaii (strain DSM 16993 / JCM 10545 / NBRC 100140 / 7) (Sulfolobus tokodaii) protein is Peroxiredoxin 1.